Reading from the N-terminus, the 350-residue chain is Galactokinase (350 aa).

Position 15–18 (15–18 (EHTD)) interacts with substrate. Residues S47 and 99-105 (GAGLSSS) contribute to the ATP site. Mg(2+) contacts are provided by S105 and E137. D149 functions as the Proton acceptor in the catalytic mechanism. Y198 contacts substrate.

Belongs to the GHMP kinase family. GalK subfamily.

The protein localises to the cytoplasm. The enzyme catalyses alpha-D-galactose + ATP = alpha-D-galactose 1-phosphate + ADP + H(+). It participates in carbohydrate metabolism; galactose metabolism. In terms of biological role, catalyzes the transfer of the gamma-phosphate of ATP to D-galactose to form alpha-D-galactose-1-phosphate (Gal-1-P). This Pyrococcus horikoshii (strain ATCC 700860 / DSM 12428 / JCM 9974 / NBRC 100139 / OT-3) protein is Galactokinase.